The chain runs to 50 residues: Small ribosomal subunit protein uS14 (50 aa).

Positions 15, 18, 33, and 36 each coordinate Zn(2+).

Belongs to the universal ribosomal protein uS14 family. Zinc-binding uS14 subfamily. In terms of assembly, part of the 30S ribosomal subunit. Requires Zn(2+) as cofactor.

Its function is as follows. Binds 16S rRNA, required for the assembly of 30S particles. This is Small ribosomal subunit protein uS14 from Methanococcoides burtonii (strain DSM 6242 / NBRC 107633 / OCM 468 / ACE-M).